The chain runs to 491 residues: Probable glycine dehydrogenase (decarboxylating) subunit 2 (491 aa).

K273 carries the N6-(pyridoxal phosphate)lysine modification.

Belongs to the GcvP family. C-terminal subunit subfamily. In terms of assembly, the glycine cleavage system is composed of four proteins: P, T, L and H. In this organism, the P 'protein' is a heterodimer of two subunits. It depends on pyridoxal 5'-phosphate as a cofactor.

It carries out the reaction N(6)-[(R)-lipoyl]-L-lysyl-[glycine-cleavage complex H protein] + glycine + H(+) = N(6)-[(R)-S(8)-aminomethyldihydrolipoyl]-L-lysyl-[glycine-cleavage complex H protein] + CO2. Its function is as follows. The glycine cleavage system catalyzes the degradation of glycine. The P protein binds the alpha-amino group of glycine through its pyridoxal phosphate cofactor; CO(2) is released and the remaining methylamine moiety is then transferred to the lipoamide cofactor of the H protein. The protein is Probable glycine dehydrogenase (decarboxylating) subunit 2 of Bacillus cereus (strain B4264).